The primary structure comprises 99 residues: Ferredoxin (99 aa).

Positions 4-96 (YKIHLLCEEE…DCTISTHVEQ (93 aa)) constitute a 2Fe-2S ferredoxin-type domain. C42, C47, C50, and C80 together coordinate [2Fe-2S] cluster.

It belongs to the 2Fe2S plant-type ferredoxin family. As to quaternary structure, forms a complex with heterodimeric ferredoxin-thioredoxin reductase (FTR) and thioredoxin. The cofactor is [2Fe-2S] cluster.

It localises to the plastid. The protein localises to the chloroplast. Its function is as follows. Ferredoxins are iron-sulfur proteins that transfer electrons in a wide variety of metabolic reactions. This chain is Ferredoxin (petF), found in Pyropia yezoensis (Susabi-nori).